Reading from the N-terminus, the 193-residue chain is ATP-dependent Clp protease proteolytic subunit (193 aa).

Ser-98 acts as the Nucleophile in catalysis. The active site involves His-123.

This sequence belongs to the peptidase S14 family. In terms of assembly, fourteen ClpP subunits assemble into 2 heptameric rings which stack back to back to give a disk-like structure with a central cavity, resembling the structure of eukaryotic proteasomes.

It is found in the cytoplasm. The enzyme catalyses Hydrolysis of proteins to small peptides in the presence of ATP and magnesium. alpha-casein is the usual test substrate. In the absence of ATP, only oligopeptides shorter than five residues are hydrolyzed (such as succinyl-Leu-Tyr-|-NHMec, and Leu-Tyr-Leu-|-Tyr-Trp, in which cleavage of the -Tyr-|-Leu- and -Tyr-|-Trp bonds also occurs).. Its function is as follows. Cleaves peptides in various proteins in a process that requires ATP hydrolysis. Has a chymotrypsin-like activity. Plays a major role in the degradation of misfolded proteins. The chain is ATP-dependent Clp protease proteolytic subunit from Haemophilus influenzae (strain PittEE).